The chain runs to 839 residues: Protein translocase subunit SecA (839 aa).

ATP-binding positions include Gln-85, 103–107 (GEGKT), and Asp-493. The segment covering 780–790 (QIHEQERERAS) has biased composition (basic and acidic residues). A disordered region spans residues 780–839 (QIHEQERERASQRATTAAPQNIQSQQSANTDDLPKVERNEACPCGSGKKFKNCHGRKSFS). Residues 791–809 (QRATTAAPQNIQSQQSANT) show a composition bias toward polar residues. Positions 821, 823, 832, and 833 each coordinate Zn(2+). The span at 827–839 (KKFKNCHGRKSFS) shows a compositional bias: basic residues.

Belongs to the SecA family. In terms of assembly, monomer and homodimer. Part of the essential Sec protein translocation apparatus which comprises SecA, SecYEG and auxiliary proteins SecDF. Other proteins may also be involved. It depends on Zn(2+) as a cofactor.

It is found in the cell membrane. It localises to the cytoplasm. The enzyme catalyses ATP + H2O + cellular proteinSide 1 = ADP + phosphate + cellular proteinSide 2.. In terms of biological role, part of the Sec protein translocase complex. Interacts with the SecYEG preprotein conducting channel. Has a central role in coupling the hydrolysis of ATP to the transfer of proteins into and across the cell membrane, serving as an ATP-driven molecular motor driving the stepwise translocation of polypeptide chains across the membrane. The chain is Protein translocase subunit SecA from Streptococcus pyogenes serotype M6 (strain ATCC BAA-946 / MGAS10394).